The following is a 236-amino-acid chain: Sugar fermentation stimulation protein homolog (236 aa).

This sequence belongs to the SfsA family.

This Paramagnetospirillum magneticum (strain ATCC 700264 / AMB-1) (Magnetospirillum magneticum) protein is Sugar fermentation stimulation protein homolog.